The sequence spans 363 residues: Ribosome-binding ATPase YchF (363 aa).

Positions F3–K257 constitute an OBG-type G domain. N12–T17 contacts ATP. The Mg(2+) site is built by S16 and T36. Positions N278–Y361 constitute a TGS domain.

The protein belongs to the TRAFAC class OBG-HflX-like GTPase superfamily. OBG GTPase family. YchF/OLA1 subfamily. The cofactor is Mg(2+).

Functionally, ATPase that binds to both the 70S ribosome and the 50S ribosomal subunit in a nucleotide-independent manner. This chain is Ribosome-binding ATPase YchF, found in Buchnera aphidicola subsp. Baizongia pistaciae (strain Bp).